The primary structure comprises 179 residues: Cytochrome b6-f complex iron-sulfur subunit (179 aa).

The helical transmembrane segment at 21 to 43 threads the bilayer; it reads LLTFGTVTGVALGALYPVVNYFI. The region spanning 61–162 is the Rieske domain; it reads GNDVSVTKFL…TNVSDDKIVL (102 aa). [2Fe-2S] cluster contacts are provided by Cys-108, His-110, Cys-126, and His-129. Cys-113 and Cys-128 are joined by a disulfide.

The protein belongs to the Rieske iron-sulfur protein family. The 4 large subunits of the cytochrome b6-f complex are cytochrome b6, subunit IV (17 kDa polypeptide, PetD), cytochrome f and the Rieske protein, while the 4 small subunits are PetG, PetL, PetM and PetN. The complex functions as a dimer. It depends on [2Fe-2S] cluster as a cofactor.

It localises to the cellular thylakoid membrane. The enzyme catalyses 2 oxidized [plastocyanin] + a plastoquinol + 2 H(+)(in) = 2 reduced [plastocyanin] + a plastoquinone + 4 H(+)(out). In terms of biological role, component of the cytochrome b6-f complex, which mediates electron transfer between photosystem II (PSII) and photosystem I (PSI), cyclic electron flow around PSI, and state transitions. The polypeptide is Cytochrome b6-f complex iron-sulfur subunit (Nostoc punctiforme (strain ATCC 29133 / PCC 73102)).